A 361-amino-acid chain; its full sequence is tRNA-specific 2-thiouridylase MnmA (361 aa).

ATP is bound by residues 8 to 15 (GMSGGVDS) and Met34. The interval 94 to 96 (NPD) is interaction with target base in tRNA. Catalysis depends on Cys99, which acts as the Nucleophile. Cys99 and Cys195 are joined by a disulfide. Gly123 contacts ATP. The interval 145–147 (KDQ) is interaction with tRNA. Catalysis depends on Cys195, which acts as the Cysteine persulfide intermediate. The interval 307–308 (RY) is interaction with tRNA.

It belongs to the MnmA/TRMU family.

The protein localises to the cytoplasm. The enzyme catalyses S-sulfanyl-L-cysteinyl-[protein] + uridine(34) in tRNA + AH2 + ATP = 2-thiouridine(34) in tRNA + L-cysteinyl-[protein] + A + AMP + diphosphate + H(+). Functionally, catalyzes the 2-thiolation of uridine at the wobble position (U34) of tRNA, leading to the formation of s(2)U34. The chain is tRNA-specific 2-thiouridylase MnmA from Legionella pneumophila subsp. pneumophila (strain Philadelphia 1 / ATCC 33152 / DSM 7513).